Consider the following 68-residue polypeptide: Toxin Cg2 (68 aa).

Positions 1–66 (KDGYLVNKST…VYPIPGKTCS (66 aa)) constitute an LCN-type CS-alpha/beta domain. 4 cysteine pairs are disulfide-bonded: C12-C65, C16-C41, C25-C46, and C29-C48.

The protein belongs to the long (4 C-C) scorpion toxin superfamily. Sodium channel inhibitor family. As to expression, expressed by the venom gland.

The protein localises to the secreted. Binds to sodium channels (Nav) and inhibits them. The protein is Toxin Cg2 of Centruroides gracilis (Slenderbrown scorpion).